Reading from the N-terminus, the 175-residue chain is Polyadenylate-binding protein-interacting protein 6 (175 aa).

The PAM2-like signature appears at 7 to 17 (TLNPYAAAYVP). Residues 83–126 (EMDMDIEYLLATYPGLSQESINDVYLANTCDLDATIEMLNQLEI) enclose the CUE domain. The tract at residues 145–175 (PEIITESSKQKNDGSSASSSSGIRNANVSSS) is disordered. Positions 166 to 175 (GIRNANVSSS) are enriched in polar residues.

The polypeptide is Polyadenylate-binding protein-interacting protein 6 (CID6) (Arabidopsis thaliana (Mouse-ear cress)).